A 328-amino-acid chain; its full sequence is DNA-directed RNA polymerase subunit alpha (328 aa).

The interval 1-234 (MQNSPTEYLK…GQLSVFADLE (234 aa)) is alpha N-terminal domain (alpha-NTD). The alpha C-terminal domain (alpha-CTD) stretch occupies residues 248–328 (VDPILLRPVD…NWPPAGLEKV (81 aa)).

This sequence belongs to the RNA polymerase alpha chain family. In terms of assembly, homodimer. The RNAP catalytic core consists of 2 alpha, 1 beta, 1 beta' and 1 omega subunit. When a sigma factor is associated with the core the holoenzyme is formed, which can initiate transcription.

It carries out the reaction RNA(n) + a ribonucleoside 5'-triphosphate = RNA(n+1) + diphosphate. Its function is as follows. DNA-dependent RNA polymerase catalyzes the transcription of DNA into RNA using the four ribonucleoside triphosphates as substrates. In Methylobacillus flagellatus (strain ATCC 51484 / DSM 6875 / VKM B-1610 / KT), this protein is DNA-directed RNA polymerase subunit alpha.